The sequence spans 265 residues: Phosphonates import ATP-binding protein PhnC (265 aa).

The 245-residue stretch at 18 to 262 folds into the ABC transporter domain; the sequence is LVVEHLRKEY…HLKQIYGGEE (245 aa). Residue 51–58 coordinates ATP; it reads GPSGTGKS.

It belongs to the ABC transporter superfamily. Phosphonates importer (TC 3.A.1.9.1) family. In terms of assembly, the complex is composed of two ATP-binding proteins (PhnC), two transmembrane proteins (PhnE) and a solute-binding protein (PhnD).

Its subcellular location is the cell inner membrane. The enzyme catalyses phosphonate(out) + ATP + H2O = phosphonate(in) + ADP + phosphate + H(+). In terms of biological role, part of the ABC transporter complex PhnCDE involved in phosphonates import. Responsible for energy coupling to the transport system. In Nitratidesulfovibrio vulgaris (strain ATCC 29579 / DSM 644 / CCUG 34227 / NCIMB 8303 / VKM B-1760 / Hildenborough) (Desulfovibrio vulgaris), this protein is Phosphonates import ATP-binding protein PhnC.